The chain runs to 307 residues: uncharacterized protein (307 aa).

Composition is skewed to basic and acidic residues over residues T42–P52 and Q112–H121. The tract at residues T42 to A153 is disordered. The segment covering K129 to S139 has biased composition (basic residues).

This is an uncharacterized protein from Mus musculus (Mouse).